Consider the following 666-residue polypeptide: Putative cysteine-rich receptor-like protein kinase 31 (666 aa).

An N-terminal signal peptide occupies residues 1-23 (MCLNTLCAILCFVLTVSFGFVSA). 2 consecutive Gnk2-homologous domains span residues 24–130 (QKCG…NNSF) and 136–245 (LEPT…GYKY). The Extracellular portion of the chain corresponds to 24 to 280 (QKCGESVFFR…PDGKKISTGV (257 aa)). N-linked (GlcNAc...) asparagine glycans are attached at residues Asn-52, Asn-62, Asn-104, Asn-127, and Asn-151. The helical transmembrane segment at 281–301 (IVAIVVSAVIFVVLVALGLVI) threads the bilayer. Residues 302 to 666 (WKRRQSYKTL…SASITRATPR (365 aa)) are Cytoplasmic-facing. The 278-residue stretch at 339 to 616 (FSRNNKLGQG…IFQMLTNSSI (278 aa)) folds into the Protein kinase domain. ATP-binding positions include 345–353 (LGQGGFGEV) and Lys-367. Phosphotyrosine is present on Tyr-412. Asp-464 functions as the Proton acceptor in the catalytic mechanism. The residue at position 468 (Ser-468) is a Phosphoserine. At Thr-504 the chain carries Phosphothreonine. Tyr-512 is subject to Phosphotyrosine.

The protein belongs to the protein kinase superfamily. Ser/Thr protein kinase family. CRK subfamily.

The protein resides in the membrane. The catalysed reaction is L-seryl-[protein] + ATP = O-phospho-L-seryl-[protein] + ADP + H(+). The enzyme catalyses L-threonyl-[protein] + ATP = O-phospho-L-threonyl-[protein] + ADP + H(+). This chain is Putative cysteine-rich receptor-like protein kinase 31 (CRK31), found in Arabidopsis thaliana (Mouse-ear cress).